The primary structure comprises 172 residues: Ubiquitin-conjugating enzyme E2 PEX4 (172 aa).

The UBC core domain maps to 14 to 167 (SASKRLIKEL…VELWCQDSDS (154 aa)). The active-site Glycyl thioester intermediate is the cysteine 104.

The protein belongs to the ubiquitin-conjugating enzyme family.

The catalysed reaction is S-ubiquitinyl-[E1 ubiquitin-activating enzyme]-L-cysteine + [E2 ubiquitin-conjugating enzyme]-L-cysteine = [E1 ubiquitin-activating enzyme]-L-cysteine + S-ubiquitinyl-[E2 ubiquitin-conjugating enzyme]-L-cysteine.. It functions in the pathway protein modification; protein ubiquitination. In terms of biological role, ubiquitin-conjugating enzyme E2 that is essential for peroxisome biogenesis and plays a key role in development, pathogenicity, and cell wall integrity. Required for long and very long-chain fatty acid utilization and is involved in lipid droplet accumulation and the elimination of reactive oxygen species. Controls the expression of proteins involved in protein biosynthesis, fatty acid metabolism, cell wall synthesis, oxidation-reduction reactions, as well as of the enzymes involved in the biosynthesis of the mycotoxin deoxynivalenol (DON), including TRI5, TRI6, and TRI10. The chain is Ubiquitin-conjugating enzyme E2 PEX4 from Gibberella zeae (strain ATCC MYA-4620 / CBS 123657 / FGSC 9075 / NRRL 31084 / PH-1) (Wheat head blight fungus).